A 292-amino-acid polypeptide reads, in one-letter code: tRNA-cytidine(32) 2-sulfurtransferase (292 aa).

A PP-loop motif motif is present at residues 53-58; sequence SGGKDS. Positions 128, 131, and 219 each coordinate [4Fe-4S] cluster.

This sequence belongs to the TtcA family. In terms of assembly, homodimer. Requires Mg(2+) as cofactor. It depends on [4Fe-4S] cluster as a cofactor.

Its subcellular location is the cytoplasm. The enzyme catalyses cytidine(32) in tRNA + S-sulfanyl-L-cysteinyl-[cysteine desulfurase] + AH2 + ATP = 2-thiocytidine(32) in tRNA + L-cysteinyl-[cysteine desulfurase] + A + AMP + diphosphate + H(+). Its pathway is tRNA modification. In terms of biological role, catalyzes the ATP-dependent 2-thiolation of cytidine in position 32 of tRNA, to form 2-thiocytidine (s(2)C32). The sulfur atoms are provided by the cysteine/cysteine desulfurase (IscS) system. This is tRNA-cytidine(32) 2-sulfurtransferase from Cereibacter sphaeroides (strain ATCC 17023 / DSM 158 / JCM 6121 / CCUG 31486 / LMG 2827 / NBRC 12203 / NCIMB 8253 / ATH 2.4.1.) (Rhodobacter sphaeroides).